Consider the following 445-residue polypeptide: MSKLPRELTRDLERSLPAVASLGSSLSHSQSLSSHLLPPPEKRRAISDVRRTFCLFVTFDLLFISLLWIIELNTNTGIRKNLEQEIIQYNFKTSFFDIFVLAFFRFSGLLLGYAVLRLRHWWVIAVTTLVSSAFLIVKVILSELLSKGAFGYLLPIVSFVLAWLETWFLDFKVLPQEAEEERWYLAAQVAVARGPLLFSGALSEGQFYSPPESFAGSDNESDEEVAGKKSFSAQEREYIRQGKEATAVVDQILAQEENWKFEKNNEYGDTVYTIEVPFHGKTFILKTFLPCPAELVYQEVILQPERMVLWNKTVTACQILQRVEDNTLISYDVSAGAAGGVVSPRDFVNVRRIERRRDRYLSSGIATSHSAKPPTHKYVRGENGPGGFIVLKSASNPRVCTFVWILNTDLKGRLPRYLIHQSLAATMFEFAFHLRQRISELGARA.

Topologically, residues 1-51 (MSKLPRELTRDLERSLPAVASLGSSLSHSQSLSSHLLPPPEKRRAISDVRR) are cytoplasmic. In terms of domain architecture, MENTAL spans 46–217 (ISDVRRTFCL…YSPPESFAGS (172 aa)). A helical membrane pass occupies residues 52–72 (TFCLFVTFDLLFISLLWIIEL). At 73–94 (NTNTGIRKNLEQEIIQYNFKTS) the chain is on the extracellular side. Residues 95–115 (FFDIFVLAFFRFSGLLLGYAV) form a helical membrane-spanning segment. At 116–120 (LRLRH) the chain is on the cytoplasmic side. The helical transmembrane segment at 121 to 141 (WWVIAVTTLVSSAFLIVKVIL) threads the bilayer. The Extracellular portion of the chain corresponds to 142–148 (SELLSKG). A helical membrane pass occupies residues 149-169 (AFGYLLPIVSFVLAWLETWFL). At 170 to 445 (DFKVLPQEAE…QRISELGARA (276 aa)) the chain is on the cytoplasmic side. An FFAT motif is present at residues 206 to 212 (QFYSPPE). Serine 209 is modified (phosphoserine). An START domain is found at 230 to 443 (SFSAQEREYI…LRQRISELGA (214 aa)).

Belongs to the STARD3 family. In terms of assembly, homodimer. Interacts (via the MENTAL domain) with STARD3NL. Interacts (via phosphorylated FFAT motif) with VAPA (via MSP domain). Interacts (via phosphorylated FFAT motif) with VAPB (via MSP domain). Interacts (via phosphorylated FFAT motif) with MOSPD2 (via MSP domain); this interaction allows enrichment of MOSPD2 around endosomes. Post-translationally, phosphorylation at Ser-209 is necessary and sufficient for the direct interaction of the phosphorylated FFAT motif with the MSP domain of MOSPD2, VAPA and VAPB and allows the tethering of two membranes that participates in the formation of ER-endosome contacts. Phosphorylation of the FFAT motif leads to conformation changes. Additional phosphorylations around the core FFAT motif (QFYSPPE) are not essential but strengthen the interaction with MOSPD2, VAPA and VAPB. Phosphorylation at Ser-209 of FFAT motif drives membrane tethering between the endoplasmic reticulum and late endosomes via interaction with VAPA and VAPB that in turn allows the efficient transport of sterol mediated by the START domain. Expressed in retina.

The protein resides in the late endosome membrane. It carries out the reaction cholesterol(in) = cholesterol(out). Its function is as follows. Sterol-binding protein that mediates cholesterol transport from the endoplasmic reticulum to endosomes. The sterol transport mechanism is triggered by phosphorylation of FFAT motif that leads to membrane tethering between the endoplasmic reticulum and late endosomes via interaction with VAPA and VAPB. Acts as a lipid transfer protein that redirects sterol to the endosome at the expense of the cell membrane and favors membrane formation inside endosomes. May also mediate cholesterol transport between other membranes, such as mitochondria membrane or cell membrane. However, such results need additional experimental evidences; probably mainly mediates cholesterol transport from the endoplasmic reticulum to endosomes. Does not activate transcriptional cholesterol sensing. Able to bind other lipids, such as lutein, a xanthophyll carotenoids that form the macular pigment of the retina. This is StAR-related lipid transfer protein 3 from Homo sapiens (Human).